We begin with the raw amino-acid sequence, 664 residues long: Intraflagellar transport protein 70A (664 aa).

TPR repeat units lie at residues 11–44 (DGEF…SPRS), 45–78 (RAGL…HPEL), 153–186 (LDGQ…SGYR), 188–220 (DLSY…GIRQ), 392–423 (LTKQ…EKYI), 424–456 (PVLM…CNDH), and 458–491 (VWKL…HYDN). A coiled-coil region spans residues 507-534 (YIMTSQNEEAEELMRKIEKEEEQLSYDD). Residues 543–576 (CIVNLVIGTLYCAKGNYDFGISRVIKSLEPYNKK) form a TPR 8 repeat.

It belongs to the TTC30/dfy-1/fleer family.

The protein resides in the cell projection. It localises to the cilium. Required for polyglutamylation of axonemal tubulin. Plays a role in anterograde intraflagellar transport (IFT), the process by which cilia precursors are transported from the base of the cilium to the site of their incorporation at the tip. This Bos taurus (Bovine) protein is Intraflagellar transport protein 70A (IFT70A).